A 184-amino-acid polypeptide reads, in one-letter code: Putative manganese efflux pump MntP (184 aa).

A run of 6 helical transmembrane segments spans residues 12-32 (SIMA…MGMI), 39-59 (IIYI…FGML), 63-83 (LLSG…LLVL), 99-119 (FIAP…LDSF), 132-152 (VWMT…LGLL), and 164-184 (YSGA…LFPL).

This sequence belongs to the MntP (TC 9.B.29) family.

It is found in the cell membrane. In terms of biological role, probably functions as a manganese efflux pump. This chain is Putative manganese efflux pump MntP, found in Bacillus pumilus (strain SAFR-032).